A 563-amino-acid chain; its full sequence is Methylcrotonoyl-CoA carboxylase beta chain, mitochondrial (563 aa).

Residues 1–22 constitute a mitochondrion transit peptide; it reads MWGALRSALRPCCRAAVPPQRA. One can recognise a CoA carboxyltransferase N-terminal domain in the interval 49–306; that stretch reads MKALVSQLHE…QKKMDVTIEP (258 aa). Residues 49–555 are carboxyltransferase; the sequence is MKALVSQLHE…SAALNAPIQR (507 aa). The residue at position 70 (lysine 70) is an N6-acetyllysine; alternate. At lysine 70 the chain carries N6-succinyllysine; alternate. Position 141 is an N6-succinyllysine (lysine 141). Residues 309 to 555 enclose the CoA carboxyltransferase C-terminal domain; the sequence is EPLFPADELY…SAALNAPIQR (247 aa). The acyl-CoA binding stretch occupies residues 343-372; that stretch reads RFNEFKALYGDTLVTGFARIFGYPVGIIGN. Lysine 433 bears the N6-succinyllysine mark. Lysine 495 is subject to N6-acetyllysine; alternate. At lysine 495 the chain carries N6-succinyllysine; alternate. Lysine 511 carries the N6-acetyllysine modification.

Belongs to the AccD/PCCB family. As to quaternary structure, probably a dodecamer composed of six biotin-containing alpha subunits (MCCC1) and six beta (MCCC2) subunits.

The protein localises to the mitochondrion matrix. The enzyme catalyses 3-methylbut-2-enoyl-CoA + hydrogencarbonate + ATP = 3-methyl-(2E)-glutaconyl-CoA + ADP + phosphate + H(+). It participates in amino-acid degradation; L-leucine degradation; (S)-3-hydroxy-3-methylglutaryl-CoA from 3-isovaleryl-CoA: step 2/3. Functionally, carboxyltransferase subunit of the 3-methylcrotonyl-CoA carboxylase, an enzyme that catalyzes the conversion of 3-methylcrotonyl-CoA to 3-methylglutaconyl-CoA, a critical step for leucine and isovaleric acid catabolism. This is Methylcrotonoyl-CoA carboxylase beta chain, mitochondrial (Mccc2) from Mus musculus (Mouse).